Reading from the N-terminus, the 174-residue chain is Major allergen Can f 1 (174 aa).

The first 18 residues, methionine 1 to alanine 18, serve as a signal peptide directing secretion. Cysteines 78 and 169 form a disulfide. A glycan (N-linked (GlcNAc...) asparagine) is linked at asparagine 80.

This sequence belongs to the calycin superfamily. Lipocalin family. As to expression, tongue epithelial tissue.

It is found in the secreted. The protein is Major allergen Can f 1 of Canis lupus familiaris (Dog).